The sequence spans 308 residues: HPr kinase/phosphorylase (308 aa).

Active-site residues include His136 and Lys157. 151–158 (GESGIGKS) lines the ATP pocket. Residue Ser158 participates in Mg(2+) binding. Catalysis depends on Asp175, which acts as the Proton acceptor; for phosphorylation activity. Proton donor; for dephosphorylation activity. The interval 198–207 (IEVRGMGIID) is important for the catalytic mechanism of both phosphorylation and dephosphorylation. Mg(2+) is bound at residue Glu199. Residue Arg240 is part of the active site. The segment at 261-266 (PIRPGR) is important for the catalytic mechanism of dephosphorylation.

It belongs to the HPrK/P family. Homohexamer. The cofactor is Mg(2+).

The catalysed reaction is [HPr protein]-L-serine + ATP = [HPr protein]-O-phospho-L-serine + ADP + H(+). It catalyses the reaction [HPr protein]-O-phospho-L-serine + phosphate + H(+) = [HPr protein]-L-serine + diphosphate. Its function is as follows. Catalyzes the ATP- as well as the pyrophosphate-dependent phosphorylation of a specific serine residue in HPr, a phosphocarrier protein of the phosphoenolpyruvate-dependent sugar phosphotransferase system (PTS). HprK/P also catalyzes the pyrophosphate-producing, inorganic phosphate-dependent dephosphorylation (phosphorolysis) of seryl-phosphorylated HPr (P-Ser-HPr). The two antagonistic activities of HprK/P are regulated by several intracellular metabolites, which change their concentration in response to the absence or presence of rapidly metabolisable carbon sources (glucose, fructose, etc.) in the growth medium. Therefore, by controlling the phosphorylation state of HPr, HPrK/P is a sensor enzyme that plays a major role in the regulation of carbon metabolism and sugar transport: it mediates carbon catabolite repression (CCR), and regulates PTS-catalyzed carbohydrate uptake and inducer exclusion. The polypeptide is HPr kinase/phosphorylase (Clostridium kluyveri (strain NBRC 12016)).